The primary structure comprises 64 residues: Neuropeptide-like 4 (64 aa).

Positions 1–18 are cleaved as a signal peptide; the sequence is MFKLLVVVFAALFAAALA. 2 consecutive propeptides follow at residues 19–40 and 63–64; these read VPAP…EPAP and YG.

It localises to the secreted. This is Neuropeptide-like 4 (Nplp4) from Drosophila melanogaster (Fruit fly).